The primary structure comprises 344 residues: Type II methyltransferase M.FnuDI (344 aa).

The SAM-dependent MTase C5-type domain occupies 1–330; it reads MKLLSLFSGA…KRIKETLTDK (330 aa). The active site involves cysteine 71.

It belongs to the class I-like SAM-binding methyltransferase superfamily. C5-methyltransferase family.

The catalysed reaction is a 2'-deoxycytidine in DNA + S-adenosyl-L-methionine = a 5-methyl-2'-deoxycytidine in DNA + S-adenosyl-L-homocysteine + H(+). A methylase, recognizes the double-stranded sequence 5'-GGCC-3', methylates C-? on both strands, and protects the DNA from cleavage by the FnuDI endonuclease. The sequence is that of Type II methyltransferase M.FnuDI (fnuDIM) from Fusobacterium nucleatum.